The primary structure comprises 389 residues: Mannitol-1-phosphate 5-dehydrogenase (389 aa).

A7–G18 contributes to the NAD(+) binding site. Residue K216 is part of the active site.

The protein belongs to the mannitol dehydrogenase family. Monomer.

The enzyme catalyses D-mannitol 1-phosphate + NAD(+) = beta-D-fructose 6-phosphate + NADH + H(+). Catalyzes the NAD(H)-dependent interconversion of D-fructose 6-phosphate and D-mannitol 1-phosphate in the mannitol metabolic pathway. This Pyrenophora tritici-repentis (strain Pt-1C-BFP) (Wheat tan spot fungus) protein is Mannitol-1-phosphate 5-dehydrogenase.